The sequence spans 473 residues: ATP synthase subunit beta (473 aa).

153–160 (GGAGVGKT) contributes to the ATP binding site.

Belongs to the ATPase alpha/beta chains family. In terms of assembly, F-type ATPases have 2 components, CF(1) - the catalytic core - and CF(0) - the membrane proton channel. CF(1) has five subunits: alpha(3), beta(3), gamma(1), delta(1), epsilon(1). CF(0) has three main subunits: a(1), b(2) and c(9-12). The alpha and beta chains form an alternating ring which encloses part of the gamma chain. CF(1) is attached to CF(0) by a central stalk formed by the gamma and epsilon chains, while a peripheral stalk is formed by the delta and b chains.

Its subcellular location is the cell inner membrane. It catalyses the reaction ATP + H2O + 4 H(+)(in) = ADP + phosphate + 5 H(+)(out). Functionally, produces ATP from ADP in the presence of a proton gradient across the membrane. The catalytic sites are hosted primarily by the beta subunits. The chain is ATP synthase subunit beta from Rickettsia akari (strain Hartford).